We begin with the raw amino-acid sequence, 605 residues long: F-box/WD repeat-containing protein pof1 (605 aa).

One can recognise an F-box domain in the interval 107–153; it reads LDFLSLLPVEISFRILSFLDARSLCQAAQVSKHWKELADDDVIWHRM. A compositionally biased stretch (basic and acidic residues) spans 195-212; sequence GVDQAHESSPVKKAKLDD. The segment at 195-231 is disordered; it reads GVDQAHESSPVKKAKLDDYPTSSNEETISSVKPPSPN. Residues 214 to 231 show a composition bias toward polar residues; it reads PTSSNEETISSVKPPSPN. 2 positions are modified to phosphoserine: Ser-229 and Ser-232. 7 WD repeats span residues 271 to 299, 311 to 339, 350 to 379, 390 to 420, 432 to 460, 472 to 500, and 510 to 538; these read GHSD…RLWN, GHSS…RIWN, HGHT…KLWH, GHTG…KIWS, AHIG…KQWD, GHIE…KVWE, and NHSE…YLWL.

As to quaternary structure, a part of the E3 ubiquitin ligase Skp1-Cullin-1-F-box (SCF) complex. Interacts with cul1, skp1 and phosphorylated zip1.

It localises to the nucleus. In terms of biological role, probably recognizes and binds to some phosphorylated proteins and promotes their ubiquitination and degradation. Required for the inactivation of zip1 via ubiquitination. The protein is F-box/WD repeat-containing protein pof1 (pof1) of Schizosaccharomyces pombe (strain 972 / ATCC 24843) (Fission yeast).